The primary structure comprises 137 residues: UPF0768 protein C1952.04c (137 aa).

The segment covering 79–93 (QRRRREDLPTPERPE) has biased composition (basic and acidic residues). The disordered stretch occupies residues 79 to 137 (QRRRREDLPTPERPEASAQQHAFFPGSSSQQTDIPNVRPQPHIPPPRKSDEAPPPYSYK). Residues 119-137 (PHIPPPRKSDEAPPPYSYK) are compositionally biased toward pro residues.

It belongs to the UPF0768 family.

This is UPF0768 protein C1952.04c from Schizosaccharomyces pombe (strain 972 / ATCC 24843) (Fission yeast).